The following is a 351-amino-acid chain: Fe-S cluster assembly protein DRE2 (351 aa).

Residues 1 to 151 (MATTGRVLLL…KPDIGAQQAI (151 aa)) are N-terminal SAM-like domain. Disordered stretches follow at residues 93-118 (RNRE…RYND) and 157-186 (RRRK…PSSN). 2 stretches are compositionally biased toward polar residues: residues 105-114 (GNGSNANSSR) and 167-186 (TLAS…PSSN). The interval 152–243 (PLKLSRRRKE…EDELLDEDDM (92 aa)) is linker. Cys-253, Cys-264, Cys-267, and Cys-269 together coordinate [2Fe-2S] cluster. A fe-S binding site A region spans residues 253–269 (CRPKPGKRRRACKDCSC). [4Fe-4S] cluster-binding residues include Cys-314, Cys-317, Cys-325, and Cys-328. 2 short sequence motifs (cx2C motif) span residues 314 to 317 (CGNC) and 325 to 328 (CDGC). The fe-S binding site B stretch occupies residues 314–328 (CGNCSLGDAFRCDGC).

The protein belongs to the anamorsin family. In terms of assembly, monomer. Interacts with TAH18. Interacts with MIA40. It depends on [2Fe-2S] cluster as a cofactor. Requires [4Fe-4S] cluster as cofactor.

Its subcellular location is the cytoplasm. The protein localises to the mitochondrion intermembrane space. In terms of biological role, component of the cytosolic iron-sulfur (Fe-S) protein assembly (CIA) machinery required for the maturation of extramitochondrial Fe-S proteins. Part of an electron transfer chain functioning in an early step of cytosolic Fe-S biogenesis, facilitating the de novo assembly of a [4Fe-4S] cluster on the scaffold complex CFD1-NBP35. Electrons are transferred to DRE2 from NADPH via the FAD- and FMN-containing protein TAH18. TAH18-DRE2 are also required for the assembly of the diferric tyrosyl radical cofactor of ribonucleotide reductase (RNR), probably by providing electrons for reduction during radical cofactor maturation in the catalytic small subunit RNR2. This chain is Fe-S cluster assembly protein DRE2, found in Ajellomyces capsulatus (strain NAm1 / WU24) (Darling's disease fungus).